Reading from the N-terminus, the 444-residue chain is Interferon-induced protein 44 (444 aa).

Residues 1–152 (MAVTTRLTWL…IQDYEVFRCE (152 aa)) enclose the TLDc domain.

It belongs to the IFI44 family. Hepatocytes.

It localises to the cytoplasm. Its function is as follows. This protein aggregates to form microtubular structures. This is Interferon-induced protein 44 (IFI44) from Pan troglodytes (Chimpanzee).